A 233-amino-acid polypeptide reads, in one-letter code: MHKVIRQMSQLRLQAPQGAALLRSADSSSISPAISPVSPPALQSKSLHTAASAGMLCAKWNKYNYGPRKWLEYNKTVHPPQETDEEPRNAYVCHMRSNIKYSPDKMWYIAAFVRGMSVDEALKQLNFVLKKGATDVKETILEAQQIAVERHNVEYKSNLWIAESFVGKGRVFKGVRRHARGRFGKVEYKHCHYFVRLEEGEPPQHYYQEPQTPEQQYESWMEQMRSRKIINSL.

This sequence belongs to the universal ribosomal protein uL22 family. Component of the mitochondrial ribosome large subunit (39S) which comprises a 16S rRNA and about 50 distinct proteins.

The protein localises to the mitochondrion. The chain is Large ribosomal subunit protein uL22m (mRpL22) from Drosophila melanogaster (Fruit fly).